Here is a 402-residue protein sequence, read N- to C-terminus: MMRALGYPRHISMENFRTPNFGLVSEVLLWLVKRYEPQTDIPSDTETEQDRVFFIKAIAQFMATKAHIKLNTKKLYQADGYAVKELLKITSVLYNAMKTKGMEGSNVGEEDISKFKFDLGSKIADLKAARQLASEITAKGASLYDLLGKEVELRELRTEAIARPLEINETEKVMRIAIKDILAQVQKTKDLLNNVASDEANLEAKIEKRKLELERNRKRLQTLQSVRPAFMDEYEKVEEELQKQYDVYLEKFRNLAYLEQQLEDHHRMEQERFEEAENTLRLMQNKLKEEEKRLLKSGSNDDSDIDIQEDDESDSELEDRRLSKPRTAMEVLMQGRPSKRIVGTMQGGDSDEDEDSEDSEMNMEDDEEDDDDLEDESIALSPAKPSRRVRKPEPLDESDNDF.

Positions 187-297 form a coiled coil; sequence KTKDLLNNVA…KEEEKRLLKS (111 aa). The segment at 292 to 402 is disordered; that stretch reads KRLLKSGSND…EPLDESDNDF (111 aa). Composition is skewed to acidic residues over residues 301–317 and 349–377; these read DDSDIDIQEDDESDSEL and DSDEDEDSEDSEMNMEDDEEDDDDLEDES. Phosphoserine occurs at positions 303, 313, and 315. Ser398 bears the Phosphoserine mark.

Belongs to the CLUAP1 family. In terms of assembly, interacts with CLU/clusterin. Interacts with UBXN10; the interaction is direct.

It is found in the cell projection. The protein localises to the cilium. The protein resides in the nucleus. Its function is as follows. Required for cilia biogenesis. Appears to function within the multiple intraflagellar transport complex B (IFT-B). Key regulator of hedgehog signaling. The chain is Clusterin-associated protein 1 (Cluap1) from Rattus norvegicus (Rat).